We begin with the raw amino-acid sequence, 177 residues long: Large ribosomal subunit protein uL5 (177 aa).

This sequence belongs to the universal ribosomal protein uL5 family. In terms of assembly, part of the 50S ribosomal subunit; contacts the 5S rRNA and probably tRNA. Forms a bridge to the 30S subunit in the 70S ribosome.

This is one of the proteins that bind and probably mediate the attachment of the 5S RNA into the large ribosomal subunit, where it forms part of the central protuberance. In the 70S ribosome it contacts protein S13 of the 30S subunit (bridge B1b), connecting the 2 subunits; this bridge is implicated in subunit movement. May contact the P site tRNA; the 5S rRNA and some of its associated proteins might help stabilize positioning of ribosome-bound tRNAs. In Sulfurisphaera tokodaii (strain DSM 16993 / JCM 10545 / NBRC 100140 / 7) (Sulfolobus tokodaii), this protein is Large ribosomal subunit protein uL5.